The sequence spans 338 residues: Trace amine-associated receptor 1 (338 aa).

Topologically, residues Met-1–Ser-24 are extracellular. Cystine bridges form between Cys-4-Cys-177, Cys-12-Cys-87, and Cys-95-Cys-181. N-linked (GlcNAc...) asparagine glycans are attached at residues Asn-9 and Asn-16. The helical transmembrane segment at Leu-25–Val-45 threads the bilayer. Over Ser-46–Asn-58 the chain is Cytoplasmic. The chain crosses the membrane as a helical span at residues Trp-59–Ser-79. Topologically, residues Met-80 to Ile-97 are extracellular. A helical membrane pass occupies residues His-98–Ile-118. Position 102 (Asp-102) interacts with 2-phenylethylamine. Topologically, residues Asp-119–Asn-135 are cytoplasmic. A helical membrane pass occupies residues Ile-136 to Gly-156. Residues Met-157–Lys-187 lie on the Extracellular side of the membrane. A helical transmembrane segment spans residues Ile-188–Ile-208. Over Tyr-209–Thr-251 the chain is Cytoplasmic. Residues Leu-252–Ile-272 form a helical membrane-spanning segment. The Extracellular portion of the chain corresponds to Asp-273–Asp-286. A helical transmembrane segment spans residues Val-287 to Tyr-307. Residues Pro-308 to Ser-338 lie on the Cytoplasmic side of the membrane.

It belongs to the G-protein coupled receptor 1 family.

The protein localises to the endomembrane system. The protein resides in the endoplasmic reticulum membrane. It is found in the cell membrane. Intracellular G-protein coupled receptor for trace amines, which recognizes endogenous amine-containing metabolites such as beta-phenylethylamine (beta-PEA), 3-iodothyronamine (T1AM), isoamylamine (IAA), cadaverine (CAD), cyclohexylamine (CHA), p-tyramine (p-TYR), trimethylamine (TMA), octopamine and tryptamine. Also functions as a receptor for various drugs and psychoactive substances, such as amphetamine and methamphetamine. Unresponsive to classical biogenic amines, such as epinephrine and histamine and only partially activated by dopamine and serotonin. Expressed in both the central and peripheral nervous system: TAAR1 activation regulates the activity of several neurotransmitter signaling pathways by (1) decreasing the basal firing rates of the neurons involved and by (2) lowering the sensitivity of receptors to neurotransmitters. Ligand binding causes a conformation change that triggers signaling via guanine nucleotide-binding proteins (G proteins) and modulates the activity of downstream effectors. TAAR1 is coupled with different G(i)/G(o)-, G(s)- or G(q)/G(11) classes of G alpha proteins depending on the ligand. CAD-binding is coupled to G(i)/G(o) G alpha proteins and mediates inhibition of adenylate cyclase activity. T1AM- or beta-PEA-binding is coupled to G(s) G alpha proteins and mediates activation of adenylate cyclase activity. CHA- or IAA-binding is coupled to G(q)/G(11) G alpha proteins and activates phospholipase C-beta, releasing diacylglycerol (DAG) and inositol 1,4,5-trisphosphate (IP3) second messengers. TMA-binding is coupled with all three G(i)/G(o)-, G(s)- or G(q)/G(11) G alpha protein subtypes. This is Trace amine-associated receptor 1 (TAAR1) from Macaca mulatta (Rhesus macaque).